Reading from the N-terminus, the 317-residue chain is Ribonuclease Z (317 aa).

Residues His-63, His-65, Asp-67, His-68, His-143, Asp-214, and His-272 each contribute to the Zn(2+) site. Asp-67 acts as the Proton acceptor in catalysis.

It belongs to the RNase Z family. Homodimer. Zn(2+) is required as a cofactor.

It carries out the reaction Endonucleolytic cleavage of RNA, removing extra 3' nucleotides from tRNA precursor, generating 3' termini of tRNAs. A 3'-hydroxy group is left at the tRNA terminus and a 5'-phosphoryl group is left at the trailer molecule.. Zinc phosphodiesterase, which displays some tRNA 3'-processing endonuclease activity. Probably involved in tRNA maturation, by removing a 3'-trailer from precursor tRNA. The chain is Ribonuclease Z from Ligilactobacillus salivarius (strain UCC118) (Lactobacillus salivarius).